A 631-amino-acid chain; its full sequence is MPRPVLSVTAFCHRLGKRESKRSFMGNSSNSWSHASFPKLELGLGQRPSPPRESPTCSICLERLREPISLDCGHDFCIRCFSTHRIPGCELPCCPECRKICKQKKGLRSLGERMKLLPQRPLPPALQETCAVRAERLLLVRINASGGLILRMGAINRCLKHPLARDTPVCLLAVLGEQHSGKSFLLDHLLRGLPGLESGDSTRPRAEGSLPGIRWGANGLTRGIWMWSHPFLLGKEGKKVAVFLVDTGDVMSPELSRETRVKLCALTMMLSSYQILNTSQELKDTDLGYLEMFVHVAEVMGKHYGMVPIQHLDLLVRDSSHHNKSGQGHVGDILQKLSGKYPKVQELLLGKRARCYLLPAPERQWVNKGQASPGGNTEDDFSHHFRAYISDVLSTAPQHAKSRCQGYWSEGRAMARGDRRLLTGQQLAQEIKNLSGWMGKSGPSFSSPDEMAAQLHDLRKVEAAKKEFEEYVRQQDIATKRIFSALRVLPDTMRNLLSTQKDAILARHGVALLCKEREQTLEALEAELQAEAKAFMDSYTMRFCGHLAAVGGAVGAGLMGLAGGVVGAGMAAAALAAEAGMVAAGAAVGATGAAVVGGGVGAGLAATVGCMEKEEDERVQGGDREPLLQEE.

An RING-type zinc finger spans residues 57-98 (CSICLERLREPISLDCGHDFCIRCFSTHRIPGCELPCCPECR). The interval 131–631 (AVRAERLLLV…GDREPLLQEE (501 aa)) is interaction with ZBTB16. Residues 166–397 (DTPVCLLAVL…YISDVLSTAP (232 aa)) form the GB1/RHD3-type G domain. 317 to 318 (RD) provides a ligand contact to GTP. The next 2 membrane-spanning stretches (helical) occupy residues 547–567 (LAAV…GVVG) and 580–600 (GMVA…GGGV).

This sequence belongs to the TRAFAC class dynamin-like GTPase superfamily. GB1/RHD3 GTPase family. GB1 subfamily. In terms of assembly, self-associates. Interacts with SP1 in an oxidative stress-regulated manner. Interacts with SIGMAR1 in an oxidative stress-regulated manner. Interacts with ZBTB16 (via C2H2-type zinc finger domains 1 and 2). Auto-ubiquitinated. As to expression, predominantly expressed in brain.

The protein localises to the membrane. It is found in the cytoplasm. Its subcellular location is the nucleus. It localises to the nuclear body. The protein resides in the nucleoplasm. The protein localises to the endosome. It is found in the cytoplasmic vesicle. Its subcellular location is the secretory vesicle. It localises to the synaptic vesicle. The protein resides in the postsynaptic density. The protein localises to the perikaryon. It is found in the cell projection. Its subcellular location is the neuron projection. The enzyme catalyses S-ubiquitinyl-[E2 ubiquitin-conjugating enzyme]-L-cysteine + [acceptor protein]-L-lysine = [E2 ubiquitin-conjugating enzyme]-L-cysteine + N(6)-ubiquitinyl-[acceptor protein]-L-lysine.. Its pathway is protein modification; protein ubiquitination. In terms of biological role, E3 ubiquitin-protein ligase that plays an important role in neuronal differentiation, including neurogenesis and gliogenesis, during brain development. During embryonic development initiates neuronal differentiation by inducing cell cycle arrest at the G0/G1 phase through up-regulation of cell-cycle regulatory proteins. Plays a role not only in the fetal period during the development of the nervous system, but also in the adult brain, where it is involved in the maintenance of neural functions and protection of the nervous tissue cells from oxidative stress-induced damage. Exhibits GTPase and E3 ubiquitin-protein ligase activities. Regulates dendritic spine density and synaptic neurotransmission; its ability to hydrolyze GTP is involved in the maintenance of dendritic spine density. In Rattus norvegicus (Rat), this protein is RING finger protein 112 (Rnf112).